Here is a 305-residue protein sequence, read N- to C-terminus: Acyl transferase (305 aa).

Catalysis depends on charge relay system residues S114, D211, and H241.

This sequence belongs to the LuxD family.

It participates in lipid metabolism; fatty acid reduction for biolumincescence. Acyl transferase is part of the fatty acid reductase system required for aldehyde biosynthesis; it produces fatty acids for the luminescent reaction. In Vibrio harveyi (Beneckea harveyi), this protein is Acyl transferase (luxD).